A 188-amino-acid chain; its full sequence is MSFTNTPERYGVISAAFHWLSAIIVYGMFALGLWMVTLSYYDGWYHKAPELHKSIGILLMMGLVIRVLWRVISPPPGPLPSYSPMTRLAARAGHLALYLLLFAIGISGYLISTADGKPISVFGWFDVPATLADAGAQADFAGALHFWLAWSVVVLSVMHGFMALKHHFIDKDDTLKRMLGKSSSDYGV.

The Cytoplasmic portion of the chain corresponds to 1–15 (MSFTNTPERYGVISA). Residues 16-36 (AFHWLSAIIVYGMFALGLWMV) form a helical membrane-spanning segment. Heme b-binding residues include H18 and H52. The Periplasmic segment spans residues 37-54 (TLSYYDGWYHKAPELHKS). A helical membrane pass occupies residues 55–75 (IGILLMMGLVIRVLWRVISPP). The Cytoplasmic segment spans residues 76–91 (PGPLPSYSPMTRLAAR). The chain crosses the membrane as a helical span at residues 92-112 (AGHLALYLLLFAIGISGYLIS). Residues 113-143 (TADGKPISVFGWFDVPATLADAGAQADFAGA) lie on the Periplasmic side of the membrane. A helical transmembrane segment spans residues 144-164 (LHFWLAWSVVVLSVMHGFMAL). Positions 145 and 159 each coordinate heme b. At 165 to 188 (KHHFIDKDDTLKRMLGKSSSDYGV) the chain is on the cytoplasmic side.

The protein belongs to the cytochrome b561 family. The cofactor is heme b.

Its subcellular location is the cell inner membrane. This Escherichia coli (strain K12) protein is Cytochrome b561 homolog 2 (yceJ).